Here is a 538-residue protein sequence, read N- to C-terminus: Phosphoenolpyruvate carboxykinase (ATP) (538 aa).

The substrate site is built by R61, Y195, and K201. Residues K201, H220, and 236–244 contribute to the ATP site; that span reads GLSGTGKTT. Residues K201 and H220 each coordinate Mn(2+). A Mn(2+)-binding site is contributed by D257. 3 residues coordinate ATP: E285, R323, and T449. Position 323 (R323) interacts with substrate.

The protein belongs to the phosphoenolpyruvate carboxykinase (ATP) family. It depends on Mn(2+) as a cofactor.

It localises to the cytoplasm. The enzyme catalyses oxaloacetate + ATP = phosphoenolpyruvate + ADP + CO2. It participates in carbohydrate biosynthesis; gluconeogenesis. Its function is as follows. Involved in the gluconeogenesis. Catalyzes the conversion of oxaloacetate (OAA) to phosphoenolpyruvate (PEP) through direct phosphoryl transfer between the nucleoside triphosphate and OAA. In Afipia carboxidovorans (strain ATCC 49405 / DSM 1227 / KCTC 32145 / OM5) (Oligotropha carboxidovorans), this protein is Phosphoenolpyruvate carboxykinase (ATP).